The sequence spans 415 residues: Fructose-like permease IIC component 1 (415 aa).

Over 1-46 (MAIKKRSATVVPGASGAAAAVKNPQASKTSFWGELPQHVMSGISRM) the chain is Cytoplasmic. In terms of domain architecture, PTS EIIC type-2 spans 35 to 410 (LPQHVMSGIS…RLMMFRKGKL (376 aa)). Residues 47 to 67 (VPTLIMGGVILAFSQLIAYSW) traverse the membrane as a helical segment. The Periplasmic portion of the chain corresponds to 68 to 101 (LKIPAEIGIMDALNSGKFSGFDLSLLKFAWLSQS). Residues 102–122 (FGGVLFGFAIPMFAAFVANSI) form a helical membrane-spanning segment. Topologically, residues 123–126 (GGKL) are cytoplasmic. The helical transmembrane segment at 127-147 (AFPAGFIGGLMSTQPTQLLNF) threads the bilayer. The Periplasmic segment spans residues 148-157 (DPSTMQWATS). Residues 158–178 (SPVPSTFIGALIISIVAGYLV) traverse the membrane as a helical segment. At 179-197 (KWMNQKIQLPDFLLAFKTT) the chain is on the cytoplasmic side. A helical membrane pass occupies residues 198-218 (FLLPILSAIFVMLAMYYVITP). Residues 219–237 (FGGWINGGIRTVLTAAGEK) are Periplasmic-facing. A helical membrane pass occupies residues 238–258 (GALMYAMGIAAATAIDLGGPI). The Cytoplasmic segment spans residues 259–276 (NKAAGFVAFSFTTDHVLP). A helical membrane pass occupies residues 277–297 (VTARSIAIVIPPIGLGLATII). The Periplasmic segment spans residues 298-318 (DRRLTGKRLFNAQLYPQGKTA). Residues 319-339 (MFLAFMGISEGAIPFALESPI) form a helical membrane-spanning segment. Residues 340 to 341 (TA) lie on the Cytoplasmic side of the membrane. A helical membrane pass occupies residues 342–362 (IPSYMVGAIVGSTAAVWLGAV). Residues 363–378 (QWFPESAIWAWPLVTN) lie on the Periplasmic side of the membrane. The helical transmembrane segment at 379-399 (LGVYMAGIALGAVITALMVVF) threads the bilayer. Residues 400-415 (LRLMMFRKGKLLIDSL) lie on the Cytoplasmic side of the membrane.

Its subcellular location is the cell inner membrane. Functionally, the phosphoenolpyruvate-dependent sugar phosphotransferase system (PTS), a major carbohydrate active -transport system, catalyzes the phosphorylation of incoming sugar substrates concomitant with their translocation across the cell membrane. This chain is Fructose-like permease IIC component 1 (fryC), found in Escherichia coli (strain K12).